A 450-amino-acid polypeptide reads, in one-letter code: Phosphoglucosamine mutase (450 aa).

The Phosphoserine intermediate role is filled by serine 101. Residues serine 101, aspartate 240, aspartate 242, and aspartate 244 each coordinate Mg(2+). Serine 101 carries the phosphoserine modification.

Belongs to the phosphohexose mutase family. The cofactor is Mg(2+). Activated by phosphorylation.

The enzyme catalyses alpha-D-glucosamine 1-phosphate = D-glucosamine 6-phosphate. Catalyzes the conversion of glucosamine-6-phosphate to glucosamine-1-phosphate. The protein is Phosphoglucosamine mutase of Streptococcus equi subsp. zooepidemicus (strain H70).